Consider the following 193-residue polypeptide: Ribosomal RNA small subunit methyltransferase G (193 aa).

S-adenosyl-L-methionine-binding positions include glycine 62, phenylalanine 67, isoleucine 111–glutamate 112, and arginine 125.

The protein belongs to the methyltransferase superfamily. RNA methyltransferase RsmG family.

The protein resides in the cytoplasm. The catalysed reaction is guanosine(527) in 16S rRNA + S-adenosyl-L-methionine = N(7)-methylguanosine(527) in 16S rRNA + S-adenosyl-L-homocysteine. In terms of biological role, specifically methylates the N7 position of guanine in position 527 of 16S rRNA. The sequence is that of Ribosomal RNA small subunit methyltransferase G from Gluconobacter oxydans (strain 621H) (Gluconobacter suboxydans).